Consider the following 421-residue polypeptide: Zinc finger protein 584 (421 aa).

Positions 17 to 88 constitute a KRAB domain; it reads VMFEDVTVYF…SWVDVTPVSR (72 aa). Positions 120 to 129 are enriched in basic and acidic residues; sequence QHQDTHSEGK. The disordered stretch occupies residues 120 to 146; sequence QHQDTHSEGKPRRHTEHGAAFPPGSSC. C2H2-type zinc fingers lie at residues 159 to 181, 214 to 236, 242 to 264, 270 to 292, 298 to 320, 326 to 348, 354 to 376, and 382 to 404; these read FKCS…LITH, HVCN…QKVH, FKCS…QRIH, YECS…RKVH, YECT…QRVH, FECK…WKVH, YECS…QQFH, and YECT…KKVH. Residues 402 to 421 form a disordered region; sequence KVHTPERRQEDRAHGKVVSC. The span at 404–415 shows a compositional bias: basic and acidic residues; sequence HTPERRQEDRAH.

This sequence belongs to the krueppel C2H2-type zinc-finger protein family.

It is found in the nucleus. May be involved in transcriptional regulation. The protein is Zinc finger protein 584 (ZNF584) of Homo sapiens (Human).